A 616-amino-acid chain; its full sequence is Chaperone protein HtpG (616 aa).

An a; substrate-binding region spans residues 1-333; sequence MKKQFDTEVN…CQDLPLNVSR (333 aa). Positions 334-542 are b; it reads EILQQNKILS…SNDPTYQMQK (209 aa). The interval 543–616 is c; the sequence is IMLSMGQEVK…INEFIEKDFL (74 aa).

It belongs to the heat shock protein 90 family. In terms of assembly, homodimer.

The protein localises to the cytoplasm. Its function is as follows. Molecular chaperone. Has ATPase activity. This is Chaperone protein HtpG from Borreliella burgdorferi (strain ATCC 35210 / DSM 4680 / CIP 102532 / B31) (Borrelia burgdorferi).